The sequence spans 102 residues: NADH-quinone oxidoreductase subunit K (102 aa).

3 helical membrane-spanning segments follow: residues 6–26 (LIAMMILAAGLFAIGLFGVLA), 30–50 (IMFQLVALEVALSGPALGFVA), and 63–83 (MFILVLTLAAAEVAVGLALFL).

This sequence belongs to the complex I subunit 4L family. As to quaternary structure, NDH-1 is composed of 14 different subunits. Subunits NuoA, H, J, K, L, M, N constitute the membrane sector of the complex.

The protein localises to the cell inner membrane. The catalysed reaction is a quinone + NADH + 5 H(+)(in) = a quinol + NAD(+) + 4 H(+)(out). In terms of biological role, NDH-1 shuttles electrons from NADH, via FMN and iron-sulfur (Fe-S) centers, to quinones in the respiratory chain. The immediate electron acceptor for the enzyme in this species is believed to be ubiquinone. Couples the redox reaction to proton translocation (for every two electrons transferred, four hydrogen ions are translocated across the cytoplasmic membrane), and thus conserves the redox energy in a proton gradient. The sequence is that of NADH-quinone oxidoreductase subunit K from Rhodopseudomonas palustris (strain BisB5).